Consider the following 189-residue polypeptide: Orotate phosphoribosyltransferase (189 aa).

5-phospho-alpha-D-ribose 1-diphosphate contacts are provided by residues Arg-94, Lys-95, Lys-98, and 120–128 (EDVTTTGGS). Residues Thr-124 and Arg-152 each contribute to the orotate site.

This sequence belongs to the purine/pyrimidine phosphoribosyltransferase family. PyrE subfamily. As to quaternary structure, homodimer. The cofactor is Mg(2+).

It carries out the reaction orotidine 5'-phosphate + diphosphate = orotate + 5-phospho-alpha-D-ribose 1-diphosphate. It functions in the pathway pyrimidine metabolism; UMP biosynthesis via de novo pathway; UMP from orotate: step 1/2. Functionally, catalyzes the transfer of a ribosyl phosphate group from 5-phosphoribose 1-diphosphate to orotate, leading to the formation of orotidine monophosphate (OMP). This chain is Orotate phosphoribosyltransferase, found in Thermococcus gammatolerans (strain DSM 15229 / JCM 11827 / EJ3).